The following is an 82-amino-acid chain: Protein costars (82 aa).

The protein belongs to the costars family.

Modulates actin dynamics and cell motility. This chain is Protein costars (cosA), found in Dictyostelium discoideum (Social amoeba).